We begin with the raw amino-acid sequence, 819 residues long: Lon protease (819 aa).

Residues 1 to 14 (MNSTNNTDSQNLDP) are compositionally biased toward polar residues. The segment at 1 to 41 (MNSTNNTDSQNLDPNASEVEKLLDESAEAEEKTDDHTPPSE) is disordered. Residues 18–38 (EVEKLLDESAEAEEKTDDHTP) show a composition bias toward basic and acidic residues. Positions 42 to 239 (LFILPLNKRP…KALVLLKKEL (198 aa)) constitute a Lon N-terminal domain. ATP is bound at residue 392–399 (GPPGVGKT). Residues 634-818 (KTPVGVATGL…DDVFKIAFPG (185 aa)) enclose the Lon proteolytic domain. Residues Ser724 and Lys767 contribute to the active site.

The protein belongs to the peptidase S16 family. As to quaternary structure, homohexamer. Organized in a ring with a central cavity.

It is found in the cytoplasm. It carries out the reaction Hydrolysis of proteins in presence of ATP.. Its function is as follows. ATP-dependent serine protease that mediates the selective degradation of mutant and abnormal proteins as well as certain short-lived regulatory proteins. Required for cellular homeostasis and for survival from DNA damage and developmental changes induced by stress. Degrades polypeptides processively to yield small peptide fragments that are 5 to 10 amino acids long. Binds to DNA in a double-stranded, site-specific manner. This is Lon protease from Chlamydia muridarum (strain MoPn / Nigg).